The primary structure comprises 323 residues: tRNA dimethylallyltransferase (323 aa).

Residue 15 to 22 (GATGSGKT) participates in ATP binding. 17-22 (TGSGKT) provides a ligand contact to substrate. 2 interaction with substrate tRNA regions span residues 40 to 43 (DSRQ) and 164 to 168 (QRLIR).

The protein belongs to the IPP transferase family. In terms of assembly, monomer. It depends on Mg(2+) as a cofactor.

It catalyses the reaction adenosine(37) in tRNA + dimethylallyl diphosphate = N(6)-dimethylallyladenosine(37) in tRNA + diphosphate. Its function is as follows. Catalyzes the transfer of a dimethylallyl group onto the adenine at position 37 in tRNAs that read codons beginning with uridine, leading to the formation of N6-(dimethylallyl)adenosine (i(6)A). This is tRNA dimethylallyltransferase from Chloroherpeton thalassium (strain ATCC 35110 / GB-78).